The sequence spans 902 residues: Magnesium-transporting ATPase, P-type 1 (902 aa).

The Cytoplasmic segment spans residues 1 to 98; that stretch reads MLKIITRQLF…KPSPWWVHLW (98 aa). A helical transmembrane segment spans residues 99–119; that stretch reads VCYRNPFNILLTILGGISYAT. Position 120 (Glu-120) is a topological domain, extracellular. A helical membrane pass occupies residues 121–141; it reads DLFAAGVIALMVGISTLLNFV. Residues 142–291 lie on the Cytoplasmic side of the membrane; it reads QEARSTKAAD…QNAFQKGISR (150 aa). The chain crosses the membrane as a helical span at residues 292–312; the sequence is VSMLLIRFMLVMAPVVLIING. At 313–321 the chain is on the extracellular side; sequence YTKGDWWEA. A helical transmembrane segment spans residues 322-339; sequence ALFALSVAVGLTPEMLPM. Glu-335 lines the Mg(2+) pocket. The Cytoplasmic segment spans residues 340–699; that stretch reads IVTSTLARGA…IEGRRTFSNM (360 aa). Asp-377 serves as the catalytic 4-aspartylphosphate intermediate. Mg(2+) is bound by residues Asp-645, Asp-649, and Asn-713. Residues 700 to 719 form a helical membrane-spanning segment; it reads LKYIKMTASSNFGNVFSVLV. The Extracellular portion of the chain corresponds to 720-728; the sequence is ASAFLPFLP. Residues 729 to 748 traverse the membrane as a helical segment; that stretch reads MLPLHLLIQNLLYDVSQVAI. Mg(2+) contacts are provided by Asn-738 and Asp-742. At 749-770 the chain is on the cytoplasmic side; sequence PFDNVDEEQIQKPQRWNPADLG. Residues 771–794 form a helical membrane-spanning segment; that stretch reads RFMVFFGPISSIFDILTFCLMWWV. At 795–803 the chain is on the extracellular side; the sequence is FHANTPETQ. The chain crosses the membrane as a helical span at residues 804–822; that stretch reads TLFQSGWFVVGLLSQTLIV. The Cytoplasmic portion of the chain corresponds to 823 to 835; it reads HMIRTRRLPFIQS. A helical membrane pass occupies residues 836 to 855; sequence RAAWPLMAMTLLVMVVGVSL. At 856 to 870 the chain is on the extracellular side; it reads PFSPLASYLQLQALP. A helical membrane pass occupies residues 871 to 890; that stretch reads LSYFPWLIAILVGYMTLTQL. Over 891-902 the chain is Cytoplasmic; the sequence is VKGFYSRRYGWQ.

This sequence belongs to the cation transport ATPase (P-type) (TC 3.A.3) family. Type IIIB subfamily.

It is found in the cell inner membrane. The catalysed reaction is Mg(2+)(out) + ATP + H2O = Mg(2+)(in) + ADP + phosphate + H(+). Mediates magnesium influx to the cytosol. In Salmonella typhimurium (strain 14028s / SGSC 2262), this protein is Magnesium-transporting ATPase, P-type 1 (mgtA).